A 359-amino-acid polypeptide reads, in one-letter code: 3-dehydroquinate synthase (359 aa).

Residues 71–76 (DGEQFK), 105–109 (GVIGD), 129–130 (TT), Lys-142, Lys-151, and 169–172 (CLQT) each bind NAD(+). Zn(2+) contacts are provided by Glu-184, His-247, and His-264.

It belongs to the sugar phosphate cyclases superfamily. Dehydroquinate synthase family. The cofactor is Co(2+). Requires Zn(2+) as cofactor. It depends on NAD(+) as a cofactor.

Its subcellular location is the cytoplasm. It catalyses the reaction 7-phospho-2-dehydro-3-deoxy-D-arabino-heptonate = 3-dehydroquinate + phosphate. Its pathway is metabolic intermediate biosynthesis; chorismate biosynthesis; chorismate from D-erythrose 4-phosphate and phosphoenolpyruvate: step 2/7. In terms of biological role, catalyzes the conversion of 3-deoxy-D-arabino-heptulosonate 7-phosphate (DAHP) to dehydroquinate (DHQ). This chain is 3-dehydroquinate synthase, found in Shewanella sp. (strain MR-4).